A 67-amino-acid chain; its full sequence is Probable Sec-independent protein translocase protein TatE (67 aa).

A helical transmembrane segment spans residues 4–21 (ISITKLLVVAALVVLLFG).

Belongs to the TatA/E family. TatE subfamily.

It is found in the cell inner membrane. Functionally, part of the twin-arginine translocation (Tat) system that transports large folded proteins containing a characteristic twin-arginine motif in their signal peptide across membranes. TatE shares overlapping functions with TatA. The polypeptide is Probable Sec-independent protein translocase protein TatE (Salmonella dublin (strain CT_02021853)).